The primary structure comprises 1888 residues: Eukaryotic translation initiation factor 4G (1888 aa).

10 disordered regions span residues 1–259 (MSFN…PTTP), 391–420 (FDNK…TQPL), 449–662 (PLPS…SLQH), 726–761 (VAHS…KNSE), 838–903 (ADVS…DGEV), 961–1042 (AYKR…SGDR), 1083–1138 (TNVS…DPRL), 1331–1356 (GERE…EREE), 1462–1605 (KWQQ…PGDL), and 1639–1691 (RFAG…PSLP). 2 stretches are compositionally biased toward polar residues: residues 13–36 (GYTQ…SGTH) and 75–84 (VNSTDSSNAP). Residues 171–183 (DEQKRDQARHESF) are compositionally biased toward basic and acidic residues. The segment covering 185–195 (PVPPMPIPLAP) has biased composition (pro residues). 4 stretches are compositionally biased toward polar residues: residues 211–231 (NVGQ…NTGD), 244–259 (ASPN…PTTP), 393–405 (NKQS…TGTS), and 458–475 (NSQP…SQNV). Basic and acidic residues predominate over residues 497-506 (PNREHTRDTH). The segment covering 586-596 (IKSSPVISKQF) has biased composition (polar residues). Over residues 603–630 (VSLESQDSSSVQSSLTASSEESELAVAH) the composition is skewed to low complexity. Residues 631–645 (SEVRRENLLGSDLHK) are compositionally biased toward basic and acidic residues. Residues 840-850 (VSASVSSSSTV) show a composition bias toward low complexity. Residues 869–885 (NMSSNEVLKNVVKSDQP) are compositionally biased toward polar residues. The segment covering 963–983 (KRPEEKKETVAHSESIERTES) has biased composition (basic and acidic residues). The EIF4E-binding stretch occupies residues 1048–1093 (KKYSRDFLLKFAEQFLDLPHNFEVTSDIESLMSTHTNVSHHHDRDP). A compositionally biased stretch (basic and acidic residues) spans 1109-1124 (RLDRRGSNLVDDDRWS). Residues 1239-1462 (QRQLKAILNK…KDAIDLRKNK (224 aa)) enclose the MIF4G domain. Composition is skewed to basic and acidic residues over residues 1467 to 1484 (RKVE…DAAQ) and 1661 to 1674 (KDLR…DRSR). The 125-residue stretch at 1700 to 1824 (RLQQLSLTAI…SLREVADLIC (125 aa)) folds into the MI domain.

The protein belongs to the eukaryotic initiation factor 4G family. As to quaternary structure, EIF4F is a multi-subunit complex, the composition of which varies with external and internal environmental conditions. It is composed of at least EIF4A, EIF4E and EIF4G. Interacts directly with eIF4E. In higher plants two isoforms of EIF4F have been identified, named isoform EIF4F and isoform EIF(iso)4F. Isoform EIF4F has subunits p220 and p26, whereas isoform EIF(iso)4F has subunits p82 and p28.

In terms of biological role, component of the protein complex eIF4F, which is involved in the recognition of the mRNA cap, ATP-dependent unwinding of 5'-terminal secondary structure and recruitment of mRNA to the ribosome. The polypeptide is Eukaryotic translation initiation factor 4G (Cucumis melo (Muskmelon)).